A 215-amino-acid polypeptide reads, in one-letter code: Cytochrome b6 (215 aa).

Residues 32-52 (LFYCLGGITLTCFLIQVATGF) form a helical membrane-spanning segment. Position 35 (Cys35) interacts with heme c. Heme b is bound by residues His86 and His100. Helical transmembrane passes span 90 to 110 (ASMMVLMMVLHVFRVYLTGGF), 116 to 136 (STWVTGVIMASCTVSFGVTGY), and 186 to 206 (LHTFVLPLLTAVFMLGHFLMI). The heme b site is built by His187 and His202.

The protein belongs to the cytochrome b family. PetB subfamily. As to quaternary structure, the 4 large subunits of the cytochrome b6-f complex are cytochrome b6, subunit IV (17 kDa polypeptide, PetD), cytochrome f and the Rieske protein, while the 4 small subunits are PetG, PetL, PetM and PetN. The complex functions as a dimer. It depends on heme b as a cofactor. Heme c serves as cofactor.

It is found in the plastid. The protein localises to the chloroplast thylakoid membrane. In terms of biological role, component of the cytochrome b6-f complex, which mediates electron transfer between photosystem II (PSII) and photosystem I (PSI), cyclic electron flow around PSI, and state transitions. In Bigelowiella natans (Pedinomonas minutissima), this protein is Cytochrome b6.